The following is a 201-amino-acid chain: IMP cyclohydrolase (201 aa).

Belongs to the archaeal IMP cyclohydrolase family.

The catalysed reaction is IMP + H2O = 5-formamido-1-(5-phospho-D-ribosyl)imidazole-4-carboxamide. The protein operates within purine metabolism; IMP biosynthesis via de novo pathway; IMP from 5-formamido-1-(5-phospho-D-ribosyl)imidazole-4-carboxamide: step 1/1. Its function is as follows. Catalyzes the cyclization of 5-formylamidoimidazole-4-carboxamide ribonucleotide to IMP. The sequence is that of IMP cyclohydrolase from Methanococcus maripaludis (strain C7 / ATCC BAA-1331).